A 512-amino-acid polypeptide reads, in one-letter code: MVLDLDLFRVDKGGDPALIRETQEKRFKDPGLVDQLVKADSEWRRCRFRADNLNKLKNLCSKTIGEKMKKKEPVGDDEFIPEDVLNFDDLTADTLSALKVSQIKKVRLLIDEAIQKCDGERLKLEAERFENLREIGNLLHPSVPISNDEDADNKVERIWGDCTVRKKYSHVDLVVMVDGFEGEKGAVVAGSRGYFLKGVLVFLEQALIQYALRTLGSRGYTPIYTPFFMRKEVMQEVAQLSQFDEELYKVIGKGSEKSDDSSYDEKYLIATSEQPIAALHRDEWLRPEDLPIKYAGLSTCFRQEVGSHGRDTRGIFRVHQFEKIEQFVYSSPHDNKSWEMFEEMIGTAEEFYQSLGIPYHIVNIVSGSLNHAASKKLDLEAWFPGSGAFRELVSCSNCTDYQARRLRIRYGQTKKMMDKVEFVHMLNATMCATTRTICAILENYQTEKGIIVPEKLREFMPPGLQELIPFVKPAPIDQEPSKKQKKQHEGSKKKAKEVTLESQLQNMEVTEA.

The residue at position 1 (methionine 1) is an N-acetylmethionine. The segment at 9-61 (RVDKGGDPALIRETQEKRFKDPGLVDQLVKADSEWRRCRFRADNLNKLKNLCS) is interaction with tRNA. The residue at position 241 (serine 241) is a Phosphoserine. Positions 271 and 302 each coordinate L-serine. ATP is bound by residues 302 to 304 (RQE) and 318 to 321 (VHQF). An N6-acetyllysine modification is found at lysine 323. Glutamate 325 contributes to the L-serine binding site. Residue 391–394 (ELVS) coordinates ATP. 2 residues coordinate L-serine: asparagine 427 and threonine 429. The disordered stretch occupies residues 472-512 (KPAPIDQEPSKKQKKQHEGSKKKAKEVTLESQLQNMEVTEA). The span at 479-499 (EPSKKQKKQHEGSKKKAKEVT) shows a compositional bias: basic and acidic residues. Positions 482–494 (KKQKKQHEGSKKK) match the Nuclear localization signal motif. The segment covering 500-512 (LESQLQNMEVTEA) has biased composition (polar residues).

This sequence belongs to the class-II aminoacyl-tRNA synthetase family. Type-1 seryl-tRNA synthetase subfamily. In terms of assembly, homodimer. The tRNA molecule may bind across the dimer. Interacts with SIRT2. Interacts with METTL6; interaction is required for the tRNA N(3)-methylcytidine methyltransferase activity of METTL6.

The protein localises to the cytoplasm. Its subcellular location is the nucleus. The enzyme catalyses tRNA(Ser) + L-serine + ATP = L-seryl-tRNA(Ser) + AMP + diphosphate + H(+). The catalysed reaction is tRNA(Sec) + L-serine + ATP = L-seryl-tRNA(Sec) + AMP + diphosphate + H(+). The protein operates within aminoacyl-tRNA biosynthesis; selenocysteinyl-tRNA(Sec) biosynthesis; L-seryl-tRNA(Sec) from L-serine and tRNA(Sec): step 1/1. Catalyzes the attachment of serine to tRNA(Ser) in a two-step reaction: serine is first activated by ATP to form Ser-AMP and then transferred to the acceptor end of tRNA(Ser). Is probably also able to aminoacylate tRNA(Sec) with serine, to form the misacylated tRNA L-seryl-tRNA(Sec), which will be further converted into selenocysteinyl-tRNA(Sec). In the nucleus, binds to the VEGFA core promoter and prevents MYC binding and transcriptional activation by MYC. Recruits SIRT2 to the VEGFA promoter, promoting deacetylation of histone H4 at 'Lys-16' (H4K16). Thereby, inhibits the production of VEGFA and sprouting angiogenesis mediated by VEGFA. In Cricetulus griseus (Chinese hamster), this protein is Serine--tRNA ligase, cytoplasmic (SARS1).